A 707-amino-acid chain; its full sequence is Leukotoxin export ATP-binding protein LtxB (707 aa).

Residues 4–125 (QKNTNLALQA…ERYQSKVILI (122 aa)) enclose the Peptidase C39 domain. Histidine 83 is an active-site residue. The next 5 helical transmembrane spans lie at 158 to 178 (LIVS…FQVV), 191 to 211 (LNVI…LGGL), 269 to 289 (ALTS…MWYY), 295 to 315 (LVVL…SPIL), and 387 to 407 (AVMV…DLSI). The ABC transmembrane type-1 domain maps to 158 to 436 (LIVSIFLQIF…LAQIWQDFQQ (279 aa)). The 236-residue stretch at 468–703 (ISFRNIKFRY…EKGLYSYLHQ (236 aa)) folds into the ABC transporter domain. 502-509 (GRSGSGKS) lines the ATP pocket.

The protein belongs to the ABC transporter superfamily. Protein-1 exporter (TC 3.A.1.109) family. In terms of assembly, probably part of a complex composed of LtxB, LtxD and TdeA, which forms a single transport channel across the two membranes.

The protein localises to the cell inner membrane. It catalyses the reaction ATP + H2O + proteinSide 1 = ADP + phosphate + proteinSide 2.. Its function is as follows. Involved in the export of the LtxA leukotoxin. This Aggregatibacter actinomycetemcomitans (Actinobacillus actinomycetemcomitans) protein is Leukotoxin export ATP-binding protein LtxB.